Here is a 177-residue protein sequence, read N- to C-terminus: MANQEKVEAVALLKGKLEEKNNFILACYSGLTVEEITGLRAQLRKEGSEMKVLKNNLFLRALKESGAHKDKNISFGPEYQGPLAAIFAKDNLPTVAKVCKDFAKVNKNLIVRAGYMDGSVLDANGVEAIAGLPSREQLLAMIAGGINAPARTIASGINQIVASLARAIQATAEKNNA.

The protein belongs to the universal ribosomal protein uL10 family. As to quaternary structure, part of the ribosomal stalk of the 50S ribosomal subunit. The N-terminus interacts with L11 and the large rRNA to form the base of the stalk. The C-terminus forms an elongated spine to which L12 dimers bind in a sequential fashion forming a multimeric L10(L12)X complex.

In terms of biological role, forms part of the ribosomal stalk, playing a central role in the interaction of the ribosome with GTP-bound translation factors. This chain is Large ribosomal subunit protein uL10, found in Leptospira borgpetersenii serovar Hardjo-bovis (strain JB197).